We begin with the raw amino-acid sequence, 167 residues long: Centrin-3 (167 aa).

EF-hand domains follow at residues 25 to 60, 61 to 96, 98 to 133, and 134 to 167; these read EQKQEIKDAFELFDTDKDQAIDYHELKVAMRALGFD, VKKADVLKILKDYDREATGKITFEDFNEVVTDWILE, DPHEEILKAFKLFDDDDSGKISLRNLRRVARELGEN, and MSDEELRAMIEEFDKDGDGEINQEEFIAIMTGDI. Positions 38, 40, 42, and 49 each coordinate Ca(2+). Serine 135 bears the Phosphoserine mark. Ca(2+)-binding residues include aspartate 147, aspartate 149, aspartate 151, glutamate 153, and glutamate 158.

It belongs to the centrin family. Monomer. Component of the TREX-2 complex (transcription and export complex 2), composed of at least ENY2, GANP, PCID2, SEM1, and either centrin CETN2 or CETN3. Interacts with USP49.

It is found in the cytoplasm. It localises to the cytoskeleton. The protein resides in the microtubule organizing center. Its subcellular location is the centrosome. The protein localises to the nucleus. It is found in the nucleolus. It localises to the nucleus envelope. The protein resides in the nuclear pore complex. Its subcellular location is the centriole. Functionally, plays a fundamental role in microtubule-organizing center structure and function. Its function is as follows. As a component of the TREX-2 complex, involved in the export of mRNAs to the cytoplasm through the nuclear pores. This is Centrin-3 (Cetn3) from Mus musculus (Mouse).